The primary structure comprises 142 residues: Hemoglobin subunit alpha-A (142 aa).

The 141-residue stretch at 2–142 (VLSAADKGNV…VATVLTAKYR (141 aa)) folds into the Globin domain. An O2-binding site is contributed by H59. H88 provides a ligand contact to heme b.

This sequence belongs to the globin family. As to quaternary structure, heterotetramer of two alpha chains and two beta chains. In terms of tissue distribution, red blood cells.

In terms of biological role, involved in oxygen transport from the lung to the various peripheral tissues. The chain is Hemoglobin subunit alpha-A (HBAA) from Anseranas semipalmata (Magpie goose).